The following is a 446-amino-acid chain: Pre-rRNA-processing protein crb3/ipi3 (446 aa).

WD repeat units lie at residues 74-113, 116-155, 172-214, 216-257, and 294-333; these read ILPE…LIYF, AHYQ…DQNS, GHKR…LLTT, ALPS…SNNV, and SCQS…VLRR.

It belongs to the WD repeat IPI3/WDR18 family. As to quaternary structure, component of the RIX1 complex, composed of ipi1, rix1/ipi2 and crb3/ipi3 in a 1:2:2 stoichiometry. The complex interacts (via rix1) with mdn1 (via its hexameric AAA ATPase ring) and the pre-60S ribosome particles. Interacts with rix1, gcr3 and Las1.

It is found in the nucleus. Its subcellular location is the chromosome. Its function is as follows. Required for both pre-rRNA processing and heterochromatic gene silencing. Functionally, component of the RIX1 complex required for processing of ITS2 sequences from 35S pre-rRNA. This is Pre-rRNA-processing protein crb3/ipi3 (crb3) from Schizosaccharomyces pombe (strain 972 / ATCC 24843) (Fission yeast).